We begin with the raw amino-acid sequence, 570 residues long: Zinc finger and BTB domain-containing protein 44 (570 aa).

Lys-4 is covalently cross-linked (Glycyl lysine isopeptide (Lys-Gly) (interchain with G-Cter in SUMO2)). The region spanning 31-98 (CDITIRVQDK…AYTATLSINT (68 aa)) is the BTB domain. 6 positions are modified to phosphoserine: Ser-135, Ser-159, Ser-161, Ser-165, Ser-191, and Ser-194. Disordered regions lie at residues 194-220 (SPVK…NRNQ) and 243-267 (EKVK…RRMA). Positions 199 to 220 (GTQTSSPQVLNSSASYSENRNQ) are enriched in polar residues. Thr-200 is modified (phosphothreonine). A Glycyl lysine isopeptide (Lys-Gly) (interchain with G-Cter in SUMO2) cross-link involves residue Lys-290. Residues 295–369 (SDEEVHEEVS…NAPPDDDDRL (75 aa)) form a disordered region. Positions 304-318 (SQPVSASQSSLSDQQ) are enriched in low complexity. A compositionally biased stretch (polar residues) spans 352-361 (TLQSTSSTNA). 4 C2H2-type zinc fingers span residues 399 to 421 (FQCP…MLIH), 427 to 449 (FQCD…RLKH), 455 to 479 (FRCQ…VSRH), and 487 to 511 (YECK…SLNH).

It localises to the nucleus. Its function is as follows. May be involved in transcriptional regulation. The sequence is that of Zinc finger and BTB domain-containing protein 44 (ZBTB44) from Homo sapiens (Human).